Here is a 304-residue protein sequence, read N- to C-terminus: Non-specific ribonucleoside hydrolase RihC (304 aa).

Residue H233 is part of the active site.

It belongs to the IUNH family. RihC subfamily.

Hydrolyzes both purine and pyrimidine ribonucleosides with a broad-substrate specificity. The sequence is that of Non-specific ribonucleoside hydrolase RihC from Escherichia coli (strain SE11).